We begin with the raw amino-acid sequence, 368 residues long: DNA replication and repair protein RecF (368 aa).

30 to 37 lines the ATP pocket; it reads GNNAQGKT.

This sequence belongs to the RecF family.

It localises to the cytoplasm. In terms of biological role, the RecF protein is involved in DNA metabolism; it is required for DNA replication and normal SOS inducibility. RecF binds preferentially to single-stranded, linear DNA. It also seems to bind ATP. This Streptococcus pyogenes serotype M12 (strain MGAS9429) protein is DNA replication and repair protein RecF.